Reading from the N-terminus, the 747-residue chain is Nucleolar complex-associated protein 3 (747 aa).

The span at 1-11 (MAARKNQKSPK) shows a compositional bias: basic residues. Residues 1–142 (MAARKNQKSP…EDEQDYELRP (142 aa)) form a disordered region. The span at 74–86 (ENPSSLKYLSSIN) shows a compositional bias: polar residues. A compositionally biased stretch (basic and acidic residues) spans 89–109 (DLGKKVEKGPRPDIYDLKKSQ). Phosphoserine is present on Ser120. Residues 214–234 (KQQIKNDKEALGIQAQQLLEE) adopt a coiled-coil conformation.

Belongs to the CBF/MAK21 family.

It is found in the nucleus. The protein resides in the nucleolus. Its function is as follows. May be required for synthesis of 60S ribosomal subunits and the transport of pre-ribosomes from the nucleoplasm to the cytoplasm. The chain is Nucleolar complex-associated protein 3 (noc3) from Schizosaccharomyces pombe (strain 972 / ATCC 24843) (Fission yeast).